The chain runs to 305 residues: Olfactory receptor 9G9 (305 aa).

Over 1-27 (MQRSNHTVTEFILLGFTTDPGMQLGLF) the chain is Extracellular. N-linked (GlcNAc...) asparagine glycosylation is present at N5. The chain crosses the membrane as a helical span at residues 28 to 48 (VVFLGVYSLTVVGNSTLIVLI). Over 49 to 64 (CNDSHLHTPMYFVVGN) the chain is Cytoplasmic. The chain crosses the membrane as a helical span at residues 65 to 85 (LSFLDLWYSSVYTPKILVICI). Residues 86-96 (SEDKSISFAGC) lie on the Extracellular side of the membrane. C96 and C178 are disulfide-bonded. Residues 97 to 117 (LCQFFFSAGLAYSECCLLAAM) traverse the membrane as a helical segment. Over 118–138 (AYDRYVAISKPLLYAQAMSIK) the chain is Cytoplasmic. A helical membrane pass occupies residues 139 to 159 (LCALLVAVSYCGGFINSSIIT). At 160-200 (KKTFSFNFCCENIIDDFFCDLLPLVKLACGEKGCYKFLMYF) the chain is on the extracellular side. Residues 201 to 221 (LLASNVICPAVLILASYLFII) traverse the membrane as a helical segment. The Cytoplasmic portion of the chain corresponds to 222–239 (TSVLRISSSQGRLKAFST). Residues 240–260 (CSSHLTSVTLYYGSILYIYAL) form a helical membrane-spanning segment. Residues 261–271 (PRSSYSFDMDK) are Extracellular-facing. Residues 272 to 291 (IVSTFYTEVLPMLNPMIYSL) form a helical membrane-spanning segment. The Cytoplasmic portion of the chain corresponds to 292–305 (RNKDVKEALKKLLP).

This sequence belongs to the G-protein coupled receptor 1 family.

The protein localises to the cell membrane. Its function is as follows. Odorant receptor. This Homo sapiens (Human) protein is Olfactory receptor 9G9 (OR9G9).